A 576-amino-acid chain; its full sequence is Arginine--tRNA ligase (576 aa).

A 'HIGH' region motif is present at residues 126 to 136 (ANPTGPMHIGH).

The protein belongs to the class-I aminoacyl-tRNA synthetase family. Monomer.

It is found in the cytoplasm. It carries out the reaction tRNA(Arg) + L-arginine + ATP = L-arginyl-tRNA(Arg) + AMP + diphosphate. The polypeptide is Arginine--tRNA ligase (Rickettsia africae (strain ESF-5)).